The primary structure comprises 2299 residues: Protein Ycf2 (2299 aa).

1642–1649 (GSIGTGRS) is an ATP binding site.

The protein belongs to the Ycf2 family.

The protein resides in the plastid. It is found in the chloroplast stroma. Probable ATPase of unknown function. Its presence in a non-photosynthetic plant (Epifagus virginiana) and experiments in tobacco indicate that it has an essential function which is probably not related to photosynthesis. The polypeptide is Protein Ycf2 (Nandina domestica (Heavenly bamboo)).